Consider the following 291-residue polypeptide: 4-hydroxy-tetrahydrodipicolinate synthase (291 aa).

Thr-45 lines the pyruvate pocket. Tyr-133 serves as the catalytic Proton donor/acceptor. The active-site Schiff-base intermediate with substrate is the Lys-161. Ile-203 serves as a coordination point for pyruvate.

It belongs to the DapA family. As to quaternary structure, homotetramer; dimer of dimers.

The protein localises to the cytoplasm. It carries out the reaction L-aspartate 4-semialdehyde + pyruvate = (2S,4S)-4-hydroxy-2,3,4,5-tetrahydrodipicolinate + H2O + H(+). It participates in amino-acid biosynthesis; L-lysine biosynthesis via DAP pathway; (S)-tetrahydrodipicolinate from L-aspartate: step 3/4. Catalyzes the condensation of (S)-aspartate-beta-semialdehyde [(S)-ASA] and pyruvate to 4-hydroxy-tetrahydrodipicolinate (HTPA). The chain is 4-hydroxy-tetrahydrodipicolinate synthase from Neisseria meningitidis serogroup C (strain 053442).